A 342-amino-acid chain; its full sequence is N-acetyl-gamma-glutamyl-phosphate reductase (342 aa).

The active site involves cysteine 147.

It belongs to the NAGSA dehydrogenase family. Type 1 subfamily.

It localises to the cytoplasm. It catalyses the reaction N-acetyl-L-glutamate 5-semialdehyde + phosphate + NADP(+) = N-acetyl-L-glutamyl 5-phosphate + NADPH + H(+). It participates in amino-acid biosynthesis; L-arginine biosynthesis; N(2)-acetyl-L-ornithine from L-glutamate: step 3/4. Functionally, catalyzes the NADPH-dependent reduction of N-acetyl-5-glutamyl phosphate to yield N-acetyl-L-glutamate 5-semialdehyde. The protein is N-acetyl-gamma-glutamyl-phosphate reductase of Campylobacter jejuni (strain RM1221).